A 220-amino-acid polypeptide reads, in one-letter code: Probable septum site-determining protein MinC (220 aa).

The protein belongs to the MinC family. In terms of assembly, interacts with MinD and FtsZ.

In terms of biological role, cell division inhibitor that blocks the formation of polar Z ring septums. Rapidly oscillates between the poles of the cell to destabilize FtsZ filaments that have formed before they mature into polar Z rings. Prevents FtsZ polymerization. The protein is Probable septum site-determining protein MinC of Vibrio parahaemolyticus serotype O3:K6 (strain RIMD 2210633).